A 291-amino-acid chain; its full sequence is Beta-lactamase Toho-1 (291 aa).

The N-terminal stretch at 1-29 (MMTQSIRRSMLTVMATLPLLFSSATLHAQ) is a signal peptide. Serine 73 (acyl-ester intermediate) is an active-site residue. 237 to 239 (KTG) provides a ligand contact to substrate.

The protein belongs to the class-A beta-lactamase family. In terms of assembly, monomer.

It catalyses the reaction a beta-lactam + H2O = a substituted beta-amino acid. Functionally, has strong cefotaxime-hydrolyzing activity. The polypeptide is Beta-lactamase Toho-1 (bla) (Escherichia coli).